The primary structure comprises 490 residues: RNA-binding protein P (490 aa).

The disordered stretch occupies residues 1-112 (MGKKRKLDSK…EEEEAAERDA (112 aa)). Over residues 13-36 (AAARSAAARAAAAAAAAAAAAAVA) the composition is skewed to low complexity. A compositionally biased stretch (acidic residues) spans 74-108 (GGEEEEVEEVEVEEEVEVDEDEDGEGEGEEEEEAA). RRM domains follow at residues 156–233 (RKIF…LASV) and 267–343 (RKIF…QKAI).

Forms homodimers. Interacts with RBP-L and RBP-208. Interacts with NSF.

The protein localises to the nucleus. It localises to the cytoplasm. Its function is as follows. RNA-binding protein that binds to a cis-localization element or zipcode, within the 5'-CDS of prolamine RNA. Binds strongly to glutelin mRNA, particularly to 3'-UTR and zipcode RNA. Recognizes and binds to glutelin zipcode RNA, which is required for proper mRNA localization to cisternal endoplasmic reticulum. Exhibits strong binding activity to a glutelin intron sequence and may participate in mRNA splicing. Required for the correct localization of glutelin and prolamine mRNA in endosperm cells during grain development. RBP-P and RBP-L form a quaternary complex with the membrane trafficking factors NSF and RAB5A. This quaternay complex carries glutelin mRNAs for active transport on endosomes to the cortical endoplasmic reticulum membrane, and enables endosome-mediated glutelin mRNA transport in endosperm cells. This is RNA-binding protein P from Oryza sativa subsp. japonica (Rice).